The primary structure comprises 269 residues: MLPAPHTCCRLLQQLLACCLLLPRFLLTVLLLWLLDFPCVRRRVIRGAKEEDPGAPEREDPPLCVSDTNRMCTLESLKAVWYGQKLDFFKSAHLGGGAPNTEVVTLEGQRLCRILDFSKGHRPLVLNFGSCTUPPFMARLQAYQRLAAQRLDFADFLLVYIEEAHPCDGWLSTDAAYQIPTHQCLQDRLRAAQLMLQGAPGCRVVADTMTNASNAAYGAYFERLYVILDGKVVYQGGRGPEGYKIGELRNWLDQYQTRATGNGALVIQV.

The Cytoplasmic segment spans residues methionine 1–glutamine 14. The helical; Signal-anchor for type II membrane protein transmembrane segment at leucine 15 to leucine 35 threads the bilayer. The Extracellular segment spans residues aspartate 36 to valine 269. The active site involves selenocysteine 133. Residue selenocysteine 133 is a non-standard amino acid, selenocysteine.

It belongs to the iodothyronine deiodinase family. Monomer. Homodimer. May undergo minor heretodimerization with DIO1 and DIO2.

Its subcellular location is the cell membrane. It localises to the endosome membrane. The catalysed reaction is 3,3',5'-triiodo-L-thyronine + iodide + A + H(+) = L-thyroxine + AH2. It carries out the reaction 3,3'-diiodo-L-thyronine + iodide + A + H(+) = 3,3',5-triiodo-L-thyronine + AH2. The enzyme catalyses 3-iodo-L-thyronine + iodide + A + H(+) = 3,5-diiodo-L-thyronine + AH2. It catalyses the reaction L-thyronine + iodide + A + H(+) = 3-iodo-L-thyronine + AH2. The catalysed reaction is 3',5'-diiodo-L-thyronine + iodide + A + H(+) = 3,3',5'-triiodo-L-thyronine + AH2. It carries out the reaction 3'-iodo-L-thyronine + iodide + A + H(+) = 3,3'-diiodo-L-thyronine + AH2. The enzyme catalyses 3,3',5'-triiodothyronamine + iodide + A + H(+) = 3,3',5,5'-tetraiodothyronamine + AH2. It catalyses the reaction 3',5'-diiodothyronamine + iodide + A + H(+) = 3,3',5'-triiodothyronamine + AH2. The catalysed reaction is 3,3'-diiodothyronamine + iodide + A + H(+) = 3,3',5-triiodothyronamine + AH2. It carries out the reaction 3-iodothyronamine + iodide + A + H(+) = 3,5-diiodothyronamine + AH2. The enzyme catalyses 3'-iodothyronamine + iodide + A + H(+) = 3,3'-diiodothyronamine + AH2. It catalyses the reaction thyronamine + iodide + A + H(+) = 3-iodothyronamine + AH2. Its function is as follows. Plays a crucial role in the metabolism of thyroid hormones (TH) and has specific roles in TH activation and inactivation by deiodination. Catalyzes the deiodination of L-thyroxine (T4) to 3,3',5'-triiodothyronine (rT3), 3,5-diiodothyronine (3,5-T2) to 3-monoiodothyronine (3-T1), rT3 to 3',5'-diiodothyronine (3',5'-T2) and 3,3'-diiodothyronine (3,3'-T2) to 3'-monoiodothyronine (3'-T1) via inner-ring deiodination (IRD). Catalyzes the deiodination of 3,5,3'-triiodothyronine (T3) to 3,3'-diiodothyronine (3,3'-T2) via IRD. Catalyzes the deiodination of 3-T1 to L-thyronine (T0) via outer-ring deiodination (ORD). Catalyzes the tyrosyl ring deiodinations of 3,3',5,5'-tetraiodothyronamine, 3,3',5'-triiodothyronamine, 3,5,3'-triiodothyronamine, 3,5-diiodothyronamine, 3,3'-diiodothyronamine and 3-iodothyronamine. This chain is Thyroxine 5-deiodinase (dio3), found in Aquarana catesbeiana (American bullfrog).